A 311-amino-acid polypeptide reads, in one-letter code: DNA-directed RNA polymerase subunit alpha (311 aa).

The tract at residues methionine 1–threonine 228 is alpha N-terminal domain (alpha-NTD). Residues proline 239 to valine 311 form an alpha C-terminal domain (alpha-CTD) region.

Belongs to the RNA polymerase alpha chain family. As to quaternary structure, in cyanobacteria the RNAP catalytic core is composed of 2 alpha, 1 beta, 1 beta', 1 gamma and 1 omega subunit. When a sigma factor is associated with the core the holoenzyme is formed, which can initiate transcription.

The catalysed reaction is RNA(n) + a ribonucleoside 5'-triphosphate = RNA(n+1) + diphosphate. DNA-dependent RNA polymerase catalyzes the transcription of DNA into RNA using the four ribonucleoside triphosphates as substrates. The sequence is that of DNA-directed RNA polymerase subunit alpha from Prochlorococcus marinus (strain MIT 9312).